Reading from the N-terminus, the 690-residue chain is Glycine--tRNA ligase beta subunit (690 aa).

The protein belongs to the class-II aminoacyl-tRNA synthetase family. Tetramer of two alpha and two beta subunits.

It is found in the cytoplasm. It carries out the reaction tRNA(Gly) + glycine + ATP = glycyl-tRNA(Gly) + AMP + diphosphate. The polypeptide is Glycine--tRNA ligase beta subunit (Tolumonas auensis (strain DSM 9187 / NBRC 110442 / TA 4)).